Reading from the N-terminus, the 322-residue chain is Phosphatidylserine decarboxylase proenzyme (322 aa).

Catalysis depends on charge relay system; for autoendoproteolytic cleavage activity residues aspartate 90, histidine 147, and serine 254. The Schiff-base intermediate with substrate; via pyruvic acid; for decarboxylase activity role is filled by serine 254. The residue at position 254 (serine 254) is a Pyruvic acid (Ser); by autocatalysis. The interval proline 293–valine 322 is disordered. Basic and acidic residues predominate over residues glutamate 308 to valine 322.

This sequence belongs to the phosphatidylserine decarboxylase family. PSD-B subfamily. Prokaryotic type I sub-subfamily. As to quaternary structure, heterodimer of a large membrane-associated beta subunit and a small pyruvoyl-containing alpha subunit. Pyruvate serves as cofactor. Post-translationally, is synthesized initially as an inactive proenzyme. Formation of the active enzyme involves a self-maturation process in which the active site pyruvoyl group is generated from an internal serine residue via an autocatalytic post-translational modification. Two non-identical subunits are generated from the proenzyme in this reaction, and the pyruvate is formed at the N-terminus of the alpha chain, which is derived from the carboxyl end of the proenzyme. The autoendoproteolytic cleavage occurs by a canonical serine protease mechanism, in which the side chain hydroxyl group of the serine supplies its oxygen atom to form the C-terminus of the beta chain, while the remainder of the serine residue undergoes an oxidative deamination to produce ammonia and the pyruvoyl prosthetic group on the alpha chain. During this reaction, the Ser that is part of the protease active site of the proenzyme becomes the pyruvoyl prosthetic group, which constitutes an essential element of the active site of the mature decarboxylase.

It localises to the cell membrane. It catalyses the reaction a 1,2-diacyl-sn-glycero-3-phospho-L-serine + H(+) = a 1,2-diacyl-sn-glycero-3-phosphoethanolamine + CO2. Its pathway is phospholipid metabolism; phosphatidylethanolamine biosynthesis; phosphatidylethanolamine from CDP-diacylglycerol: step 2/2. Catalyzes the formation of phosphatidylethanolamine (PtdEtn) from phosphatidylserine (PtdSer). This chain is Phosphatidylserine decarboxylase proenzyme, found in Escherichia coli O139:H28 (strain E24377A / ETEC).